Consider the following 191-residue polypeptide: Potassium-transporting ATPase KdpC subunit (191 aa).

The chain crosses the membrane as a helical span at residues 11–31; it reads LFVLLTAVTGVVYPLAVTGIA.

This sequence belongs to the KdpC family. In terms of assembly, the system is composed of three essential subunits: KdpA, KdpB and KdpC.

The protein localises to the cell inner membrane. Its function is as follows. Part of the high-affinity ATP-driven potassium transport (or Kdp) system, which catalyzes the hydrolysis of ATP coupled with the electrogenic transport of potassium into the cytoplasm. This subunit acts as a catalytic chaperone that increases the ATP-binding affinity of the ATP-hydrolyzing subunit KdpB by the formation of a transient KdpB/KdpC/ATP ternary complex. This Dechloromonas aromatica (strain RCB) protein is Potassium-transporting ATPase KdpC subunit.